A 3263-amino-acid polypeptide reads, in one-letter code: Protein unc-80 (3263 aa).

Disordered stretches follow at residues 491–527 (KSAL…LDEG), 627–666 (NDTE…SNPS), 939–1010 (PTTS…DDGV), 1042–1076 (DEEI…QVKA), 1380–1475 (SRQS…RMRA), 1633–1660 (LRKQ…RESA), and 1680–1721 (MQQE…LPEK). Residues 499–508 (NENRRTDHQR) show a composition bias toward basic and acidic residues. Residues 509–519 (MPSTQKSVSGS) are compositionally biased toward polar residues. Positions 644 to 658 (TTNSRRSSLNTLSRR) are enriched in low complexity. Polar residues-rich tracts occupy residues 956 to 967 (GAQSQKQSNDQA) and 981 to 1005 (SGGT…TVSS). A compositionally biased stretch (acidic residues) spans 1042–1055 (DEEISDNENEEGTS). Residues 1393–1402 (QGSTKSTTYV) are compositionally biased toward polar residues. Residues 1435–1447 (HKRKSFRNRKQSK) show a composition bias toward basic residues. Polar residues-rich tracts occupy residues 1460-1469 (GSLTSQQSPI) and 1633-1653 (LRKQ…QSTA). The segment covering 1680–1710 (MQQEKEKEKEKEKEEKDALKKQSVEQDHSST) has biased composition (basic and acidic residues). 5 consecutive transmembrane segments (helical) span residues 2088–2108 (AIGM…GLYF), 2318–2338 (AFMF…MIMH), 2352–2372 (YISI…FLIM), 2953–2973 (AIYL…APMW), and 2995–3015 (AFVD…LPMI). 2 disordered regions span residues 3078 to 3166 (YTPT…RTRS) and 3178 to 3198 (RKSR…SVEL). The span at 3124 to 3135 (IPEDPEDSEDVI) shows a compositional bias: acidic residues. Polar residues predominate over residues 3138 to 3166 (NSTGQVTSRISKSPSIPLNKTHQSSRTRS).

This sequence belongs to the unc-80 family. In terms of tissue distribution, expressed in the nervous system. Expressed in both acetylcholine and GABA motor neurons.

It localises to the membrane. Its function is as follows. Probable component of the nca-1 sodium channel complex, a cation channel that regulates neuronal activity by transmitting depolarization signals to synapses. Regulates the transition from slow to rapid forms of locomotion. Required for localization of nca-1 along axons and in non-synaptic regions. Contributes to endocytosis defects in synaptojanin mutants. Involved in the control of anasthetic response to halothane. The sequence is that of Protein unc-80 (unc-80) from Caenorhabditis elegans.